Here is a 206-residue protein sequence, read N- to C-terminus: Urease accessory protein UreG (206 aa).

15–22 is a binding site for GTP; it reads GPVGSGKT.

Belongs to the SIMIBI class G3E GTPase family. UreG subfamily. Homodimer. UreD, UreF and UreG form a complex that acts as a GTP-hydrolysis-dependent molecular chaperone, activating the urease apoprotein by helping to assemble the nickel containing metallocenter of UreC. The UreE protein probably delivers the nickel.

It localises to the cytoplasm. In terms of biological role, facilitates the functional incorporation of the urease nickel metallocenter. This process requires GTP hydrolysis, probably effectuated by UreG. This Ralstonia pickettii (strain 12J) protein is Urease accessory protein UreG.